Consider the following 588-residue polypeptide: MATSLNLSSIFSSSSRLVTTPSSVFPIRQRRRIILVTSSSSGGGGKPTILVTEKLGQAGIDLLKKYANVDCSYDLSLEELCTKISLCDALIVRSGTKVGRDVFESSRGRLKVVGRAGVGIDNVDLAAATEYGCLVVNAPTANTVAAAEHGIALLTAMARNIAQADASIKAGKWTRNKYVGVSLVGKTLAVLGFGKVGSEVARRARGLGMHVITHDPYAPADRARAIGVELVSFEVAISTADFISLHLPLTAATSKMMNDVTFAMMKKGVRIVNVARGGVIDEEALLRALDSGIVAQAALDVFTVEPPVKDNKLVLHESVTATPHLGASTMEAQEGVSIEVAEAVIGALRGELAATAVNAPMVPLEVLRELKPYVVLAEKLGRLAVQLVTGGSGVNAVKVTYASSRAPDDLDTRLLRAMVIKGIIEPISSVFINLVNSDYIAKQRGVKISEERMVLDGSPENPIEYITVRIANVESRFASALSESGEIKVEGRVKQGVPSLTKVGLFGVDVSLEGSVILCRQVDQPGMIGKVASILGDENVNVSFMSVGRIAPGKQAVMAIGVDEQPSKETLKKIGDIPAIEEFVFLKL.

A chloroplast-targeting transit peptide spans 1–38 (MATSLNLSSIFSSSSRLVTTPSSVFPIRQRRRIILVTS). Residues 195–196 (KV), Asp215, 274–276 (VAR), and Asp300 each bind NAD(+). Residue Arg276 is part of the active site. Residue Glu305 is part of the active site. His324 (proton donor) is an active-site residue. 324 to 327 (HLGA) serves as a coordination point for NAD(+). One can recognise an ACT domain in the interval 516–588 (VILCRQVDQP…AIEEFVFLKL (73 aa)).

It belongs to the D-isomer specific 2-hydroxyacid dehydrogenase family. Expressed in aerial parts. Not detected in roots and meristematic tissue. Expressed in cotyledons, adult leaves, stigma and anther filaments. Detected in the embryo.

It localises to the plastid. The protein localises to the chloroplast. It catalyses the reaction (2R)-3-phosphoglycerate + NAD(+) = 3-phosphooxypyruvate + NADH + H(+). It participates in amino-acid biosynthesis; L-serine biosynthesis; L-serine from 3-phospho-D-glycerate: step 1/3. With respect to regulation, partially inhibited by 1 mM serine. Functionally, involved in the plastidial phosphorylated pathway of serine biosynthesis (PPSB). The sequence is that of D-3-phosphoglycerate dehydrogenase 3, chloroplastic (PGDH3) from Arabidopsis thaliana (Mouse-ear cress).